A 549-amino-acid polypeptide reads, in one-letter code: MKDINPSHTAAWKALQQHFATMKDVQISDLFAQEPERFSSFSATFNDQMLVDYSKNRITAETLTRLLALAEECGVKEAIAAMFSGEKINRTEDRAVLHVALRNRSNTPINVDDKDVMPDVNAVLVKMKQFCDRVIGGEWKGYTGRIITDIVNIGIGGSDLGPYMVTEALRPYKNHLNMHYVSNVDGTHIAETIKDLDPATTLFLVASKTFTTQETMTNAHSARDWFLKTAGDEQHVARHFAALSTNAKAVAEFGIDTENMFEFWDWVGGRYSLWSAIGLSIALSLGFDNFEKLLSGAHAMDHHFVSTPLDKNLPVLLALIGIWYNNFFGMETEAILPYDQYMHRFAAYFQQGNMESNGKYVDREGHPVSYQTGPIIWGEPGTNGQHSFYQLIHQGTKIVPCDFIAPAISHNPLTDHHAKLLSNFFAQTEALAFGKSREAVEQEFSAAGKSPDQVQHVAPFKVFEGNRPTNSILLREITPYSLGALIALYEHKIFTQGAILNIYTFDQWGVELGKQLANRILPELAQDNPIDAHDSSTNGLINRYKSWRH.

Residue E355 is the Proton donor of the active site. Catalysis depends on residues H386 and K514.

Belongs to the GPI family.

The protein localises to the cytoplasm. It catalyses the reaction alpha-D-glucose 6-phosphate = beta-D-fructose 6-phosphate. It participates in carbohydrate biosynthesis; gluconeogenesis. The protein operates within carbohydrate degradation; glycolysis; D-glyceraldehyde 3-phosphate and glycerone phosphate from D-glucose: step 2/4. In terms of biological role, catalyzes the reversible isomerization of glucose-6-phosphate to fructose-6-phosphate. The sequence is that of Glucose-6-phosphate isomerase from Sodalis glossinidius (strain morsitans).